Here is a 479-residue protein sequence, read N- to C-terminus: Aspartyl/glutamyl-tRNA(Asn/Gln) amidotransferase subunit B (479 aa).

The protein belongs to the GatB/GatE family. GatB subfamily. As to quaternary structure, heterotrimer of A, B and C subunits.

The catalysed reaction is L-glutamyl-tRNA(Gln) + L-glutamine + ATP + H2O = L-glutaminyl-tRNA(Gln) + L-glutamate + ADP + phosphate + H(+). It catalyses the reaction L-aspartyl-tRNA(Asn) + L-glutamine + ATP + H2O = L-asparaginyl-tRNA(Asn) + L-glutamate + ADP + phosphate + 2 H(+). Its function is as follows. Allows the formation of correctly charged Asn-tRNA(Asn) or Gln-tRNA(Gln) through the transamidation of misacylated Asp-tRNA(Asn) or Glu-tRNA(Gln) in organisms which lack either or both of asparaginyl-tRNA or glutaminyl-tRNA synthetases. The reaction takes place in the presence of glutamine and ATP through an activated phospho-Asp-tRNA(Asn) or phospho-Glu-tRNA(Gln). The protein is Aspartyl/glutamyl-tRNA(Asn/Gln) amidotransferase subunit B of Geotalea daltonii (strain DSM 22248 / JCM 15807 / FRC-32) (Geobacter daltonii).